A 681-amino-acid polypeptide reads, in one-letter code: DNA ligase (681 aa).

NAD(+)-binding positions include 33–37 (DGQFD), 83–84 (SL), and glutamate 113. Lysine 115 acts as the N6-AMP-lysine intermediate in catalysis. NAD(+)-binding residues include arginine 136, glutamate 176, lysine 292, and lysine 316. Zn(2+)-binding residues include cysteine 410, cysteine 413, cysteine 429, and cysteine 435. One can recognise a BRCT domain in the interval 599 to 681 (SIPRNLEGLS…RALLADGPPA (83 aa)).

The protein belongs to the NAD-dependent DNA ligase family. LigA subfamily. Mg(2+) serves as cofactor. The cofactor is Mn(2+).

The catalysed reaction is NAD(+) + (deoxyribonucleotide)n-3'-hydroxyl + 5'-phospho-(deoxyribonucleotide)m = (deoxyribonucleotide)n+m + AMP + beta-nicotinamide D-nucleotide.. In terms of biological role, DNA ligase that catalyzes the formation of phosphodiester linkages between 5'-phosphoryl and 3'-hydroxyl groups in double-stranded DNA using NAD as a coenzyme and as the energy source for the reaction. It is essential for DNA replication and repair of damaged DNA. The sequence is that of DNA ligase from Mycobacteroides abscessus (strain ATCC 19977 / DSM 44196 / CCUG 20993 / CIP 104536 / JCM 13569 / NCTC 13031 / TMC 1543 / L948) (Mycobacterium abscessus).